Reading from the N-terminus, the 498-residue chain is Lysine--tRNA ligase (498 aa).

Mg(2+) is bound by residues glutamate 401 and glutamate 408.

The protein belongs to the class-II aminoacyl-tRNA synthetase family. As to quaternary structure, homodimer. Mg(2+) is required as a cofactor.

It is found in the cytoplasm. It catalyses the reaction tRNA(Lys) + L-lysine + ATP = L-lysyl-tRNA(Lys) + AMP + diphosphate. In Dehalococcoides mccartyi (strain CBDB1), this protein is Lysine--tRNA ligase.